Here is a 350-residue protein sequence, read N- to C-terminus: tRNA uridine(34) hydroxylase (350 aa).

Residues 146 to 240 (DDPDAVFIDM…YARRAREQGL (95 aa)) form the Rhodanese domain. Cys-200 (cysteine persulfide intermediate) is an active-site residue. Residues 319–328 (RRRRAGRENG) are compositionally biased toward basic and acidic residues. Residues 319–350 (RRRRAGRENGNKIFNKSRGRLNSKLSIPDPAE) form a disordered region.

It belongs to the TrhO family.

The catalysed reaction is uridine(34) in tRNA + AH2 + O2 = 5-hydroxyuridine(34) in tRNA + A + H2O. Functionally, catalyzes oxygen-dependent 5-hydroxyuridine (ho5U) modification at position 34 in tRNAs. This Salmonella agona (strain SL483) protein is tRNA uridine(34) hydroxylase.